Here is a 465-residue protein sequence, read N- to C-terminus: Probable glycine dehydrogenase (decarboxylating) subunit 1 (465 aa).

It belongs to the GcvP family. N-terminal subunit subfamily. As to quaternary structure, the glycine cleavage system is composed of four proteins: P, T, L and H. In this organism, the P 'protein' is a heterodimer of two subunits.

It carries out the reaction N(6)-[(R)-lipoyl]-L-lysyl-[glycine-cleavage complex H protein] + glycine + H(+) = N(6)-[(R)-S(8)-aminomethyldihydrolipoyl]-L-lysyl-[glycine-cleavage complex H protein] + CO2. Its function is as follows. The glycine cleavage system catalyzes the degradation of glycine. The P protein binds the alpha-amino group of glycine through its pyridoxal phosphate cofactor; CO(2) is released and the remaining methylamine moiety is then transferred to the lipoamide cofactor of the H protein. This Aeropyrum pernix (strain ATCC 700893 / DSM 11879 / JCM 9820 / NBRC 100138 / K1) protein is Probable glycine dehydrogenase (decarboxylating) subunit 1.